Consider the following 469-residue polypeptide: 3-isopropylmalate dehydratase large subunit (469 aa).

Residues cysteine 347, cysteine 410, and cysteine 413 each coordinate [4Fe-4S] cluster.

This sequence belongs to the aconitase/IPM isomerase family. LeuC type 1 subfamily. In terms of assembly, heterodimer of LeuC and LeuD. [4Fe-4S] cluster serves as cofactor.

It catalyses the reaction (2R,3S)-3-isopropylmalate = (2S)-2-isopropylmalate. Its pathway is amino-acid biosynthesis; L-leucine biosynthesis; L-leucine from 3-methyl-2-oxobutanoate: step 2/4. Functionally, catalyzes the isomerization between 2-isopropylmalate and 3-isopropylmalate, via the formation of 2-isopropylmaleate. The sequence is that of 3-isopropylmalate dehydratase large subunit from Burkholderia pseudomallei (strain 1106a).